A 224-amino-acid chain; its full sequence is Flagellar L-ring protein (224 aa).

An N-terminal signal peptide occupies residues 1–15 (MARYLVLAVALLLAA). C16 carries the N-palmitoyl cysteine lipid modification. Residue C16 is the site of S-diacylglycerol cysteine attachment.

Belongs to the FlgH family. As to quaternary structure, the basal body constitutes a major portion of the flagellar organelle and consists of four rings (L,P,S, and M) mounted on a central rod.

It localises to the cell outer membrane. The protein resides in the bacterial flagellum basal body. Its function is as follows. Assembles around the rod to form the L-ring and probably protects the motor/basal body from shearing forces during rotation. This is Flagellar L-ring protein from Shewanella baltica (strain OS223).